Consider the following 1777-residue polypeptide: FERM and PDZ domain-containing protein 3 (1777 aa).

The 78-residue stretch at 21-98 (QVTVHRDPIY…FIVLTVLHTH (78 aa)) folds into the PDZ domain. One can recognise an FERM domain in the interval 147–461 (NVLKVFLENG…GYCRLLLDSR (315 aa)). 7 disordered regions span residues 491–520 (TGGH…TPPP), 555–574 (ETRP…QGYE), 622–697 (QLGP…GRHL), 832–871 (SLGR…QGER), 1014–1216 (SAPE…PFRL), 1309–1346 (RPQA…LSSP), and 1732–1765 (QQQQ…ATVM). The span at 502-511 (YVGSVGTSPR) shows a compositional bias: polar residues. Over residues 555–564 (ETRPRTKSDP) the composition is skewed to basic and acidic residues. Residues 649–659 (SEEEEEEEDET) show a composition bias toward acidic residues. Polar residues-rich tracts occupy residues 840-850 (PSLQPIATGQS), 1015-1035 (APET…SSPR), 1046-1056 (HLSQQEDSLPV), and 1094-1111 (LQKQ…QLES). A compositionally biased stretch (low complexity) spans 1134-1168 (QSPSCQSRSHSPSCQPHGHSPSSQSRGQSPSCQPR). Over residues 1172-1202 (PLRSQAASRQVSTMPSRKLETTLNGAHSTSE) the composition is skewed to polar residues. Over residues 1732 to 1751 (QQQQQQQQQQQQVAAAAGAA) the composition is skewed to low complexity.

The sequence is that of FERM and PDZ domain-containing protein 3 from Homo sapiens (Human).